The chain runs to 380 residues: Histone deacetylase-like amidohydrolase (380 aa).

The active-site Proton donor/acceptor is the His-144. 3 residues coordinate Zn(2+): Asp-181, His-183, and Asp-269.

The protein belongs to the histone deacetylase family. In terms of assembly, homotetramer; dimer of head-to-head dimers. Zn(2+) serves as cofactor.

With respect to regulation, is inhibited by azobenzenes, stilbenes and arylazopyrazoles. Its function is as follows. Probable protein deacetylase that catalyzes deacetylation of acetylated lysine residues. In vitro, exhibits high activity against artificial HDAC (histone deacetylase) substrates containing acetylated and trifluoroacetylated lysine residues. Is not able to deacetylate acetylated polyamines. This chain is Histone deacetylase-like amidohydrolase, found in Pseudomonas aeruginosa (strain ATCC 15692 / DSM 22644 / CIP 104116 / JCM 14847 / LMG 12228 / 1C / PRS 101 / PAO1).